The sequence spans 212 residues: Putative protein phosphatase 2C 53 (212 aa).

The 208-residue stretch at 1 to 208 folds into the PPM-type phosphatase domain; it reads MEDRFSAITN…DDISVMLIPL (208 aa). Aspartate 199 provides a ligand contact to Mn(2+).

The protein belongs to the PP2C family. It depends on Mg(2+) as a cofactor. Requires Mn(2+) as cofactor.

It carries out the reaction O-phospho-L-seryl-[protein] + H2O = L-seryl-[protein] + phosphate. The enzyme catalyses O-phospho-L-threonyl-[protein] + H2O = L-threonyl-[protein] + phosphate. The protein is Putative protein phosphatase 2C 53 of Arabidopsis thaliana (Mouse-ear cress).